Consider the following 325-residue polypeptide: Probable NADH kinase (325 aa).

Belongs to the NAD kinase family. Homodimer.

It localises to the cytoplasm. It carries out the reaction NADH + ATP = ADP + NADPH + H(+). Functionally, key source of the cellular reductant NADPH which is an important antioxidant factor. The protein is Probable NADH kinase of Oryza sativa subsp. japonica (Rice).